We begin with the raw amino-acid sequence, 769 residues long: Endothelin-converting enzyme 1 (769 aa).

At 1-67 the chain is on the cytoplasmic side; that stretch reads MRTVWSPLAA…WAARTSVEKR (67 aa). Phosphothreonine is present on T24. Residues 68-88 traverse the membrane as a helical; Signal-anchor for type II membrane protein segment; the sequence is LVVLVTLLAAGLVACLAALGI. Residues 89–769 lie on the Extracellular side of the membrane; sequence QYQTRTPPVC…MNPHHKCEVW (681 aa). One can recognise a Peptidase M13 domain in the interval 97–769; that stretch reads VCLTEACVSV…MNPHHKCEVW (673 aa). Disulfide bonds link C98-C103, C121-C754, C129-C714, C184-C434, and C643-C766. 8 N-linked (GlcNAc...) asparagine glycosylation sites follow: N165, N186, N209, N269, N315, N361, N382, and N538. H606 contributes to the Zn(2+) binding site. Residue E607 is part of the active site. Position 610 (H610) interacts with Zn(2+). 2 N-linked (GlcNAc...) asparagine glycosylation sites follow: N631 and N650. E666 provides a ligand contact to Zn(2+). D670 (proton donor) is an active-site residue.

This sequence belongs to the peptidase M13 family. As to quaternary structure, homodimer; disulfide-linked. Interacts with PPP1R16B. Interacts with TSPAN8; this interaction recruits the endothelin converting enzyme ECE1 to tetraspanin-enriched microdomains and positively modulates its enzymatic activity. Zn(2+) is required as a cofactor.

Its subcellular location is the cell membrane. The enzyme catalyses Hydrolysis of the 21-Trp-|-Val-22 bond in big endothelin to form endothelin 1.. With respect to regulation, inhibited by phosphoramidon. Its function is as follows. Converts big endothelin-1 to endothelin-1. The polypeptide is Endothelin-converting enzyme 1 (Ece1) (Mus musculus (Mouse)).